The primary structure comprises 419 residues: AT-rich binding protein (419 aa).

The C2H2-type 1 zinc finger occupies isoleucine 29 to histidine 52. Residues leucine 121 to glutamate 179 are disordered. 2 stretches are compositionally biased toward low complexity: residues histidine 126–glutamine 149 and glutamine 156–glutamine 173. 2 consecutive C2H2-type zinc fingers follow at residues tyrosine 352–histidine 376 and phenylalanine 382–histidine 405.

The protein resides in the nucleus. Its function is as follows. May be a transcription factor for genes having (A+T) stretches in their promoter and/or enhancer regions. Binds to AT rich DNA. The polypeptide is AT-rich binding protein (Drosophila grimshawi (Hawaiian fruit fly)).